The chain runs to 317 residues: Aspartate carbamoyltransferase catalytic subunit (317 aa).

2 residues coordinate carbamoyl phosphate: Arg-66 and Thr-67. Residue Lys-94 participates in L-aspartate binding. Residues Arg-116, His-144, and Gln-147 each coordinate carbamoyl phosphate. L-aspartate is bound by residues Arg-177 and Arg-231. Carbamoyl phosphate-binding residues include Gly-272 and Pro-273.

It belongs to the aspartate/ornithine carbamoyltransferase superfamily. ATCase family. Heterododecamer (2C3:3R2) of six catalytic PyrB chains organized as two trimers (C3), and six regulatory PyrI chains organized as three dimers (R2).

It catalyses the reaction carbamoyl phosphate + L-aspartate = N-carbamoyl-L-aspartate + phosphate + H(+). It participates in pyrimidine metabolism; UMP biosynthesis via de novo pathway; (S)-dihydroorotate from bicarbonate: step 2/3. Functionally, catalyzes the condensation of carbamoyl phosphate and aspartate to form carbamoyl aspartate and inorganic phosphate, the committed step in the de novo pyrimidine nucleotide biosynthesis pathway. This Nitrobacter winogradskyi (strain ATCC 25391 / DSM 10237 / CIP 104748 / NCIMB 11846 / Nb-255) protein is Aspartate carbamoyltransferase catalytic subunit.